The following is a 156-amino-acid chain: Small ribosomal subunit protein uS7 (156 aa).

Belongs to the universal ribosomal protein uS7 family. Part of the 30S ribosomal subunit. Contacts proteins S9 and S11.

In terms of biological role, one of the primary rRNA binding proteins, it binds directly to 16S rRNA where it nucleates assembly of the head domain of the 30S subunit. Is located at the subunit interface close to the decoding center, probably blocks exit of the E-site tRNA. The chain is Small ribosomal subunit protein uS7 from Vibrio parahaemolyticus serotype O3:K6 (strain RIMD 2210633).